A 659-amino-acid chain; its full sequence is Threonine--tRNA ligase (659 aa).

A TGS domain is found at 7-70; it reads DSELIKLTLP…QQDGAIEIVT (64 aa). Positions 253–555 are catalytic; that stretch reads DHRKLGSELE…LIENFAGNFP (303 aa). The Zn(2+) site is built by Cys-351, His-402, and His-532.

The protein belongs to the class-II aminoacyl-tRNA synthetase family. Homodimer. Zn(2+) serves as cofactor.

Its subcellular location is the cytoplasm. It carries out the reaction tRNA(Thr) + L-threonine + ATP = L-threonyl-tRNA(Thr) + AMP + diphosphate + H(+). Catalyzes the attachment of threonine to tRNA(Thr) in a two-step reaction: L-threonine is first activated by ATP to form Thr-AMP and then transferred to the acceptor end of tRNA(Thr). Also edits incorrectly charged L-seryl-tRNA(Thr). This chain is Threonine--tRNA ligase, found in Chloroherpeton thalassium (strain ATCC 35110 / GB-78).